Here is a 360-residue protein sequence, read N- to C-terminus: DNA replication and repair protein RecF (360 aa).

30 to 37 lines the ATP pocket; the sequence is GQNGSGKT.

It belongs to the RecF family.

It is found in the cytoplasm. The RecF protein is involved in DNA metabolism; it is required for DNA replication and normal SOS inducibility. RecF binds preferentially to single-stranded, linear DNA. It also seems to bind ATP. This is DNA replication and repair protein RecF from Shewanella loihica (strain ATCC BAA-1088 / PV-4).